Consider the following 76-residue polypeptide: uncharacterized protein (76 aa).

This is an uncharacterized protein from Magallana gigas (Pacific oyster).